Reading from the N-terminus, the 456-residue chain is MEASWGSFNAERGWYVSVQQPEEAEAEELSPLLSNELHRQRSPGVSFGLSVFNLMNAIMGSGILGLAYVLANTGVFGFSFLLLTVALLASYSVHLLLSMCIQTAVTSYEDLGLFAFGLPGKLVVAGTIIIQNIGAMSSYLLIIKTELPAAIAEFLTGDYSRYWYLDGQTLLIIICVGIVFPLALLPKIGFLGYTSSLSFFFMMFFALVVIIKKWSIPCPLTLNYVEKGFQISNVTDDCKPKLFHFSKESAYALPTMAFSFLCHTSILPIYCELQSPSKKRMQNVTNTAIALSFLIYFISALFGYLTFYDKVESELLKGYSKYLSHDVVVMTVKLCILFAVLLTVPLIHFPARKAVTMMFFSNFPFSWIRHFLITLALNIIIVLLAIYVPDIRNVFGVVGASTSTCLIFIFPGLFYLKLSREDFLSWKKLGAFVLLIFGILVGNFSLALIIFDWINK.

N-acetylmethionine is present on Met1. Residues Ser4 and Ser7 each carry the phosphoserine modification. 5 helical membrane passes run 42 to 62 (SPGV…MGSG), 85 to 105 (VALL…QTAV), 111 to 131 (LGLF…IIIQ), 170 to 190 (LLII…KIGF), and 191 to 211 (LGYT…VVII). Cys218 and Cys238 are disulfide-bonded. Asn233 carries N-linked (GlcNAc...) asparagine glycosylation. A helical transmembrane segment spans residues 250–270 (AYALPTMAFSFLCHTSILPIY). A glycan (N-linked (GlcNAc...) asparagine) is linked at Asn283. The next 5 membrane-spanning stretches (helical) occupy residues 288-308 (AIAL…LTFY), 327-347 (VVVM…VPLI), 371-391 (FLIT…VPDI), 394-414 (VFGV…PGLF), and 431-451 (AFVL…LIIF).

It belongs to the amino acid/polyamine transporter 2 family.

It is found in the cell membrane. It localises to the synapse. It carries out the reaction L-glutamine(out) = L-glutamine(in). The catalysed reaction is L-glutamate(out) = L-glutamate(in). Amino acid transporter with an apparent selectivity for L-glutamine and L-glutamate. May facilitate glutamine uptake in excitatory neurons. The transport mechanism remains to be elucidated. The chain is Solute carrier family 38 member 6 from Homo sapiens (Human).